Consider the following 1848-residue polypeptide: WD repeat-containing protein 90 (1848 aa).

The tract at residues 1–222 (MAGVWQHPFV…ISPMPREMSF (222 aa)) is binds with microtubules. Disordered stretches follow at residues 257-278 (MVTA…RSVT) and 316-336 (SVSA…GVEQ). The span at 320 to 335 (RAEEARDLEDRSRGVE) shows a compositional bias: basic and acidic residues. WD repeat units follow at residues 436–479 (GHTD…AMFK), 481–523 (HVHS…RSGE), 530–570 (AHTD…LRSC), 644–683 (SSGP…VFLE), 685–724 (EHEG…YNTL), 727–766 (SHTD…QLYD), 769–808 (AEEE…LQAE), 811–850 (QHRG…QHVL), 955–993 (VHKQ…TVRP), and 998–1035 (GHSE…DPEF). 2 disordered regions span residues 1053–1133 (ALDP…VESD) and 1151–1178 (LTGS…PDSY). Acidic residues predominate over residues 1102–1113 (SESDDGQEEEGN). 2 stretches are compositionally biased toward basic and acidic residues: residues 1114 to 1129 (RDEQ…RDNL) and 1164 to 1178 (GMVK…PDSY). WD repeat units lie at residues 1252-1297 (GHPE…CMKI), 1300-1341 (HHRT…LLAT), 1343-1382 (RLFQ…TDTQ), 1395-1433 (GTAA…CFLT), 1435-1473 (EADQ…ELRE), 1532-1571 (GHRN…LLLQ), 1574-1621 (VLNQ…MEMK), 1624-1663 (PHPC…TIRV), 1670-1714 (SPIT…DKCE), 1774-1813 (PLSH…KQDF), and 1815-1848 (AYDD…IQNS).

It belongs to the WD repeat WDR90/POC16 family.

It is found in the cytoplasm. It localises to the cytoskeleton. Its subcellular location is the microtubule organizing center. The protein localises to the centrosome. The protein resides in the centriole. It is found in the centriolar satellite. Microtubule-binding protein that plays a crucial role in ensuring inner core protein localization within the centriole core, as well as in maintaining the microtubule wall integrity and the overall centriole roundness and stability. Required for efficient primary cilium formation. In Xenopus tropicalis (Western clawed frog), this protein is WD repeat-containing protein 90 (wdr90).